The chain runs to 607 residues: Translation initiation factor IF-2 (607 aa).

A disordered region spans residues 54-93; it reads SAPQAQDSTPVAETPAAAQPAAPQAASSQPAAAQAAQAVA. Over residues 62-93 the composition is skewed to low complexity; it reads TPVAETPAAAQPAAPQAASSQPAAAQAAQAVA. The region spanning 108 to 281 is the tr-type G domain; it reads HRAPVVTIMG…ELEDLRADPK (174 aa). A G1 region spans residues 117-124; that stretch reads GHVDHGKT. 117-124 is a binding site for GTP; that stretch reads GHVDHGKT. Positions 142 to 146 are G2; the sequence is GITQH. Positions 163–166 are G3; the sequence is DTPG. GTP is bound by residues 163-167 and 217-220; these read DTPGH and NKVD. The interval 217 to 220 is G4; sequence NKVD. Residues 253–255 are G5; it reads SAK.

It belongs to the TRAFAC class translation factor GTPase superfamily. Classic translation factor GTPase family. IF-2 subfamily.

It localises to the cytoplasm. Functionally, one of the essential components for the initiation of protein synthesis. Protects formylmethionyl-tRNA from spontaneous hydrolysis and promotes its binding to the 30S ribosomal subunits. Also involved in the hydrolysis of GTP during the formation of the 70S ribosomal complex. This is Translation initiation factor IF-2 from Deinococcus deserti (strain DSM 17065 / CIP 109153 / LMG 22923 / VCD115).